The primary structure comprises 227 residues: 7-cyano-7-deazaguanine synthase (227 aa).

Residue 16-26 (FSGGQDSTTCL) coordinates ATP. Zn(2+) is bound by residues cysteine 194, cysteine 202, cysteine 205, and cysteine 208.

The protein belongs to the QueC family. It depends on Zn(2+) as a cofactor.

It carries out the reaction 7-carboxy-7-deazaguanine + NH4(+) + ATP = 7-cyano-7-deazaguanine + ADP + phosphate + H2O + H(+). It participates in purine metabolism; 7-cyano-7-deazaguanine biosynthesis. In terms of biological role, catalyzes the ATP-dependent conversion of 7-carboxy-7-deazaguanine (CDG) to 7-cyano-7-deazaguanine (preQ(0)). In Haemophilus influenzae (strain 86-028NP), this protein is 7-cyano-7-deazaguanine synthase.